A 313-amino-acid polypeptide reads, in one-letter code: MYTTKRFQQLLKEFEVALLLKFSKQLLLLGKIESYLNNGSSMKHEECKSQIYDCRMAVKIYVCSITANKSTNLKHFVRLFFLLGDSERVNLCIKRLIYTFIGSINSVIDKKEDIEQELYSSCMHCSIMSPKLQKVMLAQKSLILNKVFDYLFFLYGLSGTSILYTAGDHIRKLDFKDSGFITPFFQLLLLVLLFTLTFKSKHSLNAYSLTASQFSGHTVCNESSLKPNENSCDLNLSRTATIKLESAEDDACQRVLGLIKSYMRPRTLEELKLEFRFEHKSVQDITTCILDEVDGVQMARVLEINPDAPILAF.

2 helical membrane-spanning segments follow: residues 147–167 and 178–198; these read VFDYLFFLYGLSGTSILYTAG and SGFITPFFQLLLLVLLFTLTF.

The protein localises to the mitochondrion inner membrane. In terms of biological role, has a role in meiosis. In Schizosaccharomyces pombe (strain 972 / ATCC 24843) (Fission yeast), this protein is Meiotically up-regulated gene 100 protein, mitochondrial (mug100).